We begin with the raw amino-acid sequence, 469 residues long: Glutamate--tRNA ligase 2 (469 aa).

Positions 8-18 (PSPTGFLHVGG) match the 'HIGH' region motif. The short motif at 250 to 254 (KLSKR) is the 'KMSKS' region element. Residue lysine 253 coordinates ATP.

It belongs to the class-I aminoacyl-tRNA synthetase family. Glutamate--tRNA ligase type 1 subfamily. As to quaternary structure, monomer.

It localises to the cytoplasm. The catalysed reaction is tRNA(Glu) + L-glutamate + ATP = L-glutamyl-tRNA(Glu) + AMP + diphosphate. Catalyzes the attachment of glutamate to tRNA(Glu) in a two-step reaction: glutamate is first activated by ATP to form Glu-AMP and then transferred to the acceptor end of tRNA(Glu). This Thermotoga sp. (strain RQ2) protein is Glutamate--tRNA ligase 2.